The primary structure comprises 605 residues: Elongation factor 4 (605 aa).

In terms of domain architecture, tr-type G spans 9–192; it reads SRTRNFCIIA…AIIARIPSPK (184 aa). GTP contacts are provided by residues 21 to 26 and 139 to 142; these read DHGKST and NKID.

The protein belongs to the TRAFAC class translation factor GTPase superfamily. Classic translation factor GTPase family. LepA subfamily.

Its subcellular location is the cell inner membrane. The enzyme catalyses GTP + H2O = GDP + phosphate + H(+). Functionally, required for accurate and efficient protein synthesis under certain stress conditions. May act as a fidelity factor of the translation reaction, by catalyzing a one-codon backward translocation of tRNAs on improperly translocated ribosomes. Back-translocation proceeds from a post-translocation (POST) complex to a pre-translocation (PRE) complex, thus giving elongation factor G a second chance to translocate the tRNAs correctly. Binds to ribosomes in a GTP-dependent manner. This Chlorobium limicola (strain DSM 245 / NBRC 103803 / 6330) protein is Elongation factor 4.